Consider the following 980-residue polypeptide: Ankycorbin (980 aa).

Methionine 1 is subject to N-acetylmethionine. Residue serine 11 is modified to Phosphoserine. ANK repeat units lie at residues 18 to 51 (KNDD…KHDS), 52 to 81 (EGKT…DVTA), 85 to 114 (TGHS…PAES), 118 to 147 (SGKT…PINL), 151 to 180 (DGNI…DVNS), 184 to 213 (SGRT…DLNL), and 217 to 247 (LGYN…DADL). Residues 247–259 (LKTPTKPKQHDQV) show a composition bias toward basic and acidic residues. Residues 247–301 (LKTPTKPKQHDQVSKISSERSGTPKKRKAPPPPISPTQLSDVSSPRSITSTPLSG) form a disordered region. A Phosphothreonine modification is found at threonine 249. A Nuclear localization signal motif is present at residues 270–276 (PKKRKAP). 3 positions are modified to phosphoserine: serine 281, serine 286, and serine 293. Polar residues predominate over residues 282-299 (PTQLSDVSSPRSITSTPL). Residues threonine 295 and threonine 297 each carry the phosphothreonine modification. Phosphoserine is present on residues serine 300, serine 304, serine 318, serine 327, serine 329, serine 340, serine 341, serine 350, serine 358, serine 419, serine 512, serine 515, serine 667, and serine 915. Positions 349–374 (LSLLQAKVASLTLHNKELQDKLQAKS) form a coiled coil. A disordered region spans residues 387–423 (YHSTQTDLGPSLGKPGETSPPDSKSSPSVLIHSLGKS). Residues 425–947 (TDNDVRIQQL…QHQEVISVYR (523 aa)) adopt a coiled-coil conformation.

As to quaternary structure, interacts with PALLD. Associates with actin. However, does not bind F-actin directly. In terms of tissue distribution, highly expressed in placenta, muscle, kidney and testis. Moderately expressed in heart, brain, lung, liver and intestine. Isoform 2 is widely expressed and expressed in fetal and adult testes, and spermatozoa.

Its subcellular location is the cytoplasm. It is found in the cytoskeleton. The protein resides in the stress fiber. The protein localises to the cell cortex. It localises to the cell junction. Its subcellular location is the nucleus. Functionally, plays a role in actin regulation at the ectoplasmic specialization, a type of cell junction specific to testis. Important for establishment of sperm polarity and normal spermatid adhesion. May also promote integrity of Sertoli cell tight junctions at the blood-testis barrier. The chain is Ankycorbin (RAI14) from Homo sapiens (Human).